Reading from the N-terminus, the 771-residue chain is DNA helicase/primase complex-associated protein (771 aa).

Belongs to the herpesviridae HEPA family. In terms of assembly, associates with the primase and the helicase to form the helicase-primase complex. Interacts with the origin-binding protein. Interacts with the polymerase catalytic subunit.

It is found in the host nucleus. Its function is as follows. Component of the helicase/primase complex. Unwinds the DNA at the replication forks and generates single-stranded DNA for both leading and lagging strand synthesis. The primase synthesizes short RNA primers on the lagging strand that the polymerase presumably elongates using dNTPs. The primase-associated factor has no known catalytic activity in the complex and may serve to facilitate the formation of the replisome by directly interacting with the origin-binding protein and the polymerase. The protein is DNA helicase/primase complex-associated protein of Homo sapiens (Human).